The primary structure comprises 130 residues: Protein ApaG (130 aa).

Positions arginine 3 to arginine 127 constitute an ApaG domain.

This chain is Protein ApaG, found in Rhodopseudomonas palustris (strain ATCC BAA-98 / CGA009).